We begin with the raw amino-acid sequence, 180 residues long: D(1A) dopamine receptor (180 aa).

Residues 1–10 traverse the membrane as a helical segment; the sequence is NTLLVCAAVI. Residues 11-21 are Cytoplasmic-facing; it reads RFRHLRSKVTN. A helical transmembrane segment spans residues 22–48; sequence FFVISLAVSDLLVAVLVMPWKAVAEIA. The Extracellular segment spans residues 49 to 57; it reads GFWPFGSFC. Cysteines 57 and 147 form a disulfide. A helical transmembrane segment spans residues 58–80; that stretch reads NIWVAFDIMCSTASILNLCVISV. Topologically, residues 81 to 99 are cytoplasmic; it reads DRYWAISSPFRYERKMTPK. Residues 100–124 form a helical membrane-spanning segment; the sequence is AAFILIGVAWTLSVLISFIPVQLSW. Residues 125–153 lie on the Extracellular side of the membrane; sequence HKAKPTSPPDGNATSLDETVDNCDSSLSR. N-linked (GlcNAc...) asparagine glycosylation is present at Asn136. The helical transmembrane segment at 154-179 threads the bilayer; the sequence is TYSISSSLVNFYNPVAIMXVTYTRIH. Position 180 (Arg180) is a topological domain, cytoplasmic.

The protein belongs to the G-protein coupled receptor 1 family. Interacts with DNAJC14 via its C-terminus. Interacts with DRD2. Interacts with DORIP1.

The protein localises to the cell membrane. It localises to the endoplasmic reticulum membrane. Its subcellular location is the cell projection. It is found in the cilium membrane. Its function is as follows. Dopamine receptor whose activity is mediated by G proteins which activate adenylyl cyclase. This chain is D(1A) dopamine receptor (DRD1), found in Oryctolagus cuniculus (Rabbit).